A 506-amino-acid chain; its full sequence is Glutamate--tRNA ligase (506 aa).

The short motif at 14–24 (PSPTGYLHIGG) is the 'HIGH' region element. The short motif at 261–265 (KLSKR) is the 'KMSKS' region element. Lysine 264 contributes to the ATP binding site.

The protein belongs to the class-I aminoacyl-tRNA synthetase family. Glutamate--tRNA ligase type 1 subfamily. Monomer.

It is found in the cytoplasm. It catalyses the reaction tRNA(Glu) + L-glutamate + ATP = L-glutamyl-tRNA(Glu) + AMP + diphosphate. Its function is as follows. Catalyzes the attachment of glutamate to tRNA(Glu) in a two-step reaction: glutamate is first activated by ATP to form Glu-AMP and then transferred to the acceptor end of tRNA(Glu). In Roseiflexus sp. (strain RS-1), this protein is Glutamate--tRNA ligase.